The following is a 455-amino-acid chain: Fez family zinc finger protein 2 (455 aa).

The interval 1–22 (MASSASLETMVPPACPRAGASP) is disordered. The short motif at 27–42 (TLAFSIERIMAKTSEP) is the Engrailed homology 1 repressor element. C2H2-type zinc fingers lie at residues 272 to 294 (FTCEVCGKVFNAHYNLTRHMPVH), 300 to 322 (FVCKVCGKGFRQASTLCRHKIIH), 328 to 350 (HKCNQCGKAFNRSSTLNTHIRIH), 356 to 378 (FVCEFCGKGFHQKGNYKNHKLTH), 384 to 406 (YKCTICNKAFHQVYNLTFHMHTH), and 412 to 435 (FTCATCGKGFCRNFDLKKHVRKLH).

Belongs to the krueppel C2H2-type zinc-finger protein family. As to expression, highly expressed in neocortical layer V, moderately expressed in layer VI. Expressed in subcortically projecting neurons.

The protein resides in the nucleus. Transcription repressor. Required for the specification of corticospinal motor neurons and other subcerebral projection neurons. May play a role in layer and neuronal subtype-specific patterning of subcortical projections and axonal fasciculation. Controls the development of dendritic arborization and spines of large layer V pyramidal neurons. Plays a role in rostro-caudal patterning of the diencephalon and in prethalamic formation. The sequence is that of Fez family zinc finger protein 2 (Fezf2) from Mus musculus (Mouse).